We begin with the raw amino-acid sequence, 145 residues long: Nicking endonuclease (145 aa).

Residues 126–145 form a disordered region; that stretch reads NPQEKTQVKTETKSGFARFL.

Endonuclease responsible for the single-chain interruptions (nicks) located at specific positions in the minus strand of the viral genome. The sequence is that of Nicking endonuclease from Escherichia phage T5 (Enterobacteria phage T5).